The sequence spans 640 residues: 1,4-alpha-glucan branching enzyme GlgB (640 aa).

Catalysis depends on Asp318, which acts as the Nucleophile. Glu371 serves as the catalytic Proton donor.

The protein belongs to the glycosyl hydrolase 13 family. GlgB subfamily. As to quaternary structure, monomer.

The catalysed reaction is Transfers a segment of a (1-&gt;4)-alpha-D-glucan chain to a primary hydroxy group in a similar glucan chain.. The protein operates within glycan biosynthesis; glycogen biosynthesis. In terms of biological role, catalyzes the formation of the alpha-1,6-glucosidic linkages in glycogen by scission of a 1,4-alpha-linked oligosaccharide from growing alpha-1,4-glucan chains and the subsequent attachment of the oligosaccharide to the alpha-1,6 position. This Francisella tularensis subsp. novicida (strain U112) protein is 1,4-alpha-glucan branching enzyme GlgB.